The sequence spans 258 residues: Diacetyl reductase [(S)-acetoin forming] (258 aa).

NAD(+) is bound at residue 8–32 (LVTGGAQGIGFKIAERLVEDGFKVA). S141 is a substrate binding site. Residue Y154 is the Proton acceptor of the active site. K158 is a catalytic residue.

It belongs to the short-chain dehydrogenases/reductases (SDR) family.

It carries out the reaction (S)-acetoin + NAD(+) = diacetyl + NADH + H(+). In terms of biological role, catalyzes the irreversible reduction of 2,3-butanediol to (S)-acetoin in the presence of NADH. The protein is Diacetyl reductase [(S)-acetoin forming] (butA) of Staphylococcus aureus (strain Mu50 / ATCC 700699).